Here is a 159-residue protein sequence, read N- to C-terminus: MREQPKNQISPDGLKVWRLQEIIISAVCLLIVIAVAVLSYYFHWPYWISGVLGAVWLLGSIVTVFIIPKVRHKVWRYEVHEHEIDIQSGIFVVTRVIVPMVRVQHVDTSQGPLLKKYNLATVKISTAATVHSIPALEMEEADRLRDSISRLARVTDDDV.

2 helical membrane-spanning segments follow: residues 22-42 and 47-67; these read IIIS…SYYF and WISG…VFII.

It belongs to the UPF0699 family.

It localises to the cell membrane. The sequence is that of UPF0699 transmembrane protein YdbS (ydbS) from Bacillus subtilis (strain 168).